The following is a 522-amino-acid chain: Wax ester synthase/diacylglycerol acyltransferase 4 (522 aa).

Residues 1 to 12 show a composition bias toward basic and acidic residues; it reads MEIETRPHISGD. Positions 1 to 20 are disordered; that stretch reads MEIETRPHISGDEKEEEQPL. Residues 1–205 lie on the Cytoplasmic side of the membrane; the sequence is MEIETRPHIS…SDSRLLWLVK (205 aa). The active-site Proton acceptor is the His149. Residues 206-226 traverse the membrane as a helical segment; sequence VIWTAVILGLNTVCDALEFIV. Topologically, residues 227–522 are lumenal; it reads TTLFVKDTET…QIAGLLYRML (296 aa). 2 N-linked (GlcNAc...) asparagine glycosylation sites follow: Asn270 and Asn409.

In the N-terminal section; belongs to the long-chain O-acyltransferase family. Mostly expressed in roots, flowers and siliques.

It is found in the cell membrane. It localises to the endoplasmic reticulum membrane. It carries out the reaction an acyl-CoA + a 1,2-diacyl-sn-glycerol = a triacyl-sn-glycerol + CoA. The catalysed reaction is a long chain fatty alcohol + a fatty acyl-CoA = a wax ester + CoA. Its pathway is glycerolipid metabolism; triacylglycerol biosynthesis. It participates in lipid metabolism. Its function is as follows. Bifunctional wax ester synthase/diacylglycerol acyltransferase. Involved in cuticular wax biosynthesis. The sequence is that of Wax ester synthase/diacylglycerol acyltransferase 4 from Arabidopsis thaliana (Mouse-ear cress).